A 31-amino-acid polypeptide reads, in one-letter code: Cytochrome b6-f complex subunit 6 (31 aa).

Residues 5 to 25 (ISYLGILVGALLFVTITFLTL) traverse the membrane as a helical segment.

It belongs to the PetL family. In terms of assembly, the 4 large subunits of the cytochrome b6-f complex are cytochrome b6, subunit IV (17 kDa polypeptide, PetD), cytochrome f and the Rieske protein, while the 4 small subunits are PetG, PetL, PetM and PetN. The complex functions as a dimer.

The protein resides in the plastid. Its subcellular location is the chloroplast thylakoid membrane. Component of the cytochrome b6-f complex, which mediates electron transfer between photosystem II (PSII) and photosystem I (PSI), cyclic electron flow around PSI, and state transitions. PetL is important for photoautotrophic growth as well as for electron transfer efficiency and stability of the cytochrome b6-f complex. This chain is Cytochrome b6-f complex subunit 6, found in Chlorokybus atmophyticus (Soil alga).